Reading from the N-terminus, the 152-residue chain is Flagellar assembly factor FliW (152 aa).

Belongs to the FliW family. In terms of assembly, interacts with translational regulator CsrA and flagellin(s).

It localises to the cytoplasm. Its function is as follows. Acts as an anti-CsrA protein, binds CsrA and prevents it from repressing translation of its target genes, one of which is flagellin. Binds to flagellin and participates in the assembly of the flagellum. In Desulfitobacterium hafniense (strain DSM 10664 / DCB-2), this protein is Flagellar assembly factor FliW.